The following is a 331-amino-acid chain: Biotin synthase (331 aa).

One can recognise a Radical SAM core domain in the interval 48-278 (FDSQKFEFCS…SAELRLCGGR (231 aa)). Cys66, Cys70, and Cys73 together coordinate [4Fe-4S] cluster. [2Fe-2S] cluster-binding residues include Cys110, Cys143, Cys203, and Arg273.

This sequence belongs to the radical SAM superfamily. Biotin synthase family. As to quaternary structure, homodimer. The cofactor is [4Fe-4S] cluster. It depends on [2Fe-2S] cluster as a cofactor.

It carries out the reaction (4R,5S)-dethiobiotin + (sulfur carrier)-SH + 2 reduced [2Fe-2S]-[ferredoxin] + 2 S-adenosyl-L-methionine = (sulfur carrier)-H + biotin + 2 5'-deoxyadenosine + 2 L-methionine + 2 oxidized [2Fe-2S]-[ferredoxin]. Its pathway is cofactor biosynthesis; biotin biosynthesis; biotin from 7,8-diaminononanoate: step 2/2. Catalyzes the conversion of dethiobiotin (DTB) to biotin by the insertion of a sulfur atom into dethiobiotin via a radical-based mechanism. This is Biotin synthase from Hydrogenobaculum sp. (strain Y04AAS1).